The chain runs to 602 residues: Elongation factor 4 (602 aa).

The region spanning 5-187 is the tr-type G domain; it reads DHIRNFAIIA…QIIVSLPAPE (183 aa). Residues 17-22 and 134-137 contribute to the GTP site; these read DHGKST and NKVD.

Belongs to the TRAFAC class translation factor GTPase superfamily. Classic translation factor GTPase family. LepA subfamily.

It is found in the cell inner membrane. It catalyses the reaction GTP + H2O = GDP + phosphate + H(+). Functionally, required for accurate and efficient protein synthesis under certain stress conditions. May act as a fidelity factor of the translation reaction, by catalyzing a one-codon backward translocation of tRNAs on improperly translocated ribosomes. Back-translocation proceeds from a post-translocation (POST) complex to a pre-translocation (PRE) complex, thus giving elongation factor G a second chance to translocate the tRNAs correctly. Binds to ribosomes in a GTP-dependent manner. The sequence is that of Elongation factor 4 from Pelagibacter ubique (strain HTCC1062).